The sequence spans 1163 residues: GTPase-activating protein (1163 aa).

C2 domains lie at Pro26–Phe148 and Thr261–Tyr419. Residues Glu520 to Ile737 enclose the Ras-GAP domain. The 99-residue stretch at Leu762 to Leu860 folds into the PH domain. A Btk-type zinc finger spans residues Asn862–Lys898. Zn(2+) is bound by residues His870, Cys881, Cys882, and Cys892. 2 disordered regions span residues Leu1026–Phe1051 and Pro1091–Tyr1163. Low complexity predominate over residues Pro1091 to Gln1157.

As to quaternary structure, interacts with sty. In terms of tissue distribution, in third instar larvae eye imaginal disk, expressed in cells posterior to the morphogenetic furrow, in all photoreceptor and cone cell precursors as well as in still uncommitted cells.

Its function is as follows. Inhibitory regulator of the Ras-cyclic AMP pathway. May function as a negative regulator of Ras85D/Ras1 in the sev signaling pathway. Acts cell autonomously in cone cell precursors as a negative regulator of R7 photoreceptor cell determination. In Drosophila melanogaster (Fruit fly), this protein is GTPase-activating protein (RasGAP1).